We begin with the raw amino-acid sequence, 772 residues long: Delta-like protein A (772 aa).

The signal sequence occupies residues 1–20; that stretch reads MGRHLLLLLFSILYMLLCQA. Over 21 to 536 the chain is Extracellular; that stretch reads SSSGVFELKL…SQIASDVPWT (516 aa). Residues 179–223 enclose the DSL domain; the sequence is FVCDEHYYGEGCSVFCRPRDDAFGHFTCGERGEIICDAGWKGQYC. Disulfide bonds link C181–C190, C194–C206, C214–C223, C228–C239, C232–C245, C259–C270, C265–C276, C278–C287, C294–C306, C300–C316, C318–C327, C334–C345, C339–C354, C356–C365, C372–C383, C377–C393, C395–C404, C411–C422, C416–C431, C433–C442, C449–C460, C454–C469, C471–C480, C487–C498, C492–C507, and C509–C518. EGF-like domains lie at 225 to 257, 257 to 288, and 290 to 328; these read EPIC…RYCD, DECI…LFCN, and DLNY…ASCE. Positions 330–366 constitute an EGF-like 4; calcium-binding domain; that stretch reads EVNECTGNPCRNGGSCTDMENTYSCTCPPGFYGKNCE. EGF-like domains follow at residues 368–405, 407–443, 445–481, and 483–519; these read SAMT…FNCE, KIDH…MNCD, AGDE…RNCS, and PVSR…RNCQ. The N-linked (GlcNAc...) asparagine glycan is linked to N479. A helical transmembrane segment spans residues 537–557; sequence AVGSGVLLVLLLVVACAVVVV. Residues 558-772 are Cytoplasmic-facing; the sequence is CVRSKVQQRR…KDECVIATEV (215 aa). The interval 688–722 is disordered; the sequence is EEKRRKRLKSDASEKSKYSESRYSESKYSESKYSE. Over residues 696–722 the composition is skewed to basic and acidic residues; the sequence is KSDASEKSKYSESRYSESKYSESKYSE.

Interacts with mib. Ubiquitinated by mib, leading to its endocytosis and subsequent degradation. Ubiquitinated by the ECS(ASB11) complex, leading to its degradation by the proteasome. As to expression, expressed in nervous system. In the developing nervous system, it is expressed in overlapping regions with deltaB (dlb) and deltaD (dld); in the neural plate, dla is expressed in patches of contiguous cells with dld, while dlb is confined to scattered cells within those patches that will differentiate as neurons. In 24 hours embryos, expressed in the hindbrain in stripes adjacent to rhombomere boundaries, but not in the actual boundary cells. During gastrulation and tail formation, expressed in embryonic midline cells. Expressed in hair cells of inner ear.

It localises to the membrane. Functionally, acts as a ligand for Notch receptors and is involved in primary neurogenesis. Can activate Notch receptors, thereby playing a key role in lateral inhibition, a process that prevents the immediate neighbors of each nascent neural cell from simultaneously embarking on neural differentiation. Required for boundary formation during segmentation of the hindbrain. Required for midline cell fate specification prior to germ layer formation; regulates specification of floorplate, notochord and hypochord. In inner ear, it prevents adjacent cells from adopting the same cell fate. Plays a role in angiogenesis. In Danio rerio (Zebrafish), this protein is Delta-like protein A (dla).